The chain runs to 232 residues: Ubiquinone biosynthesis O-methyltransferase (232 aa).

Positions 36, 55, 76, and 120 each coordinate S-adenosyl-L-methionine.

It belongs to the methyltransferase superfamily. UbiG/COQ3 family.

It catalyses the reaction a 3-demethylubiquinol + S-adenosyl-L-methionine = a ubiquinol + S-adenosyl-L-homocysteine + H(+). It carries out the reaction a 3-(all-trans-polyprenyl)benzene-1,2-diol + S-adenosyl-L-methionine = a 2-methoxy-6-(all-trans-polyprenyl)phenol + S-adenosyl-L-homocysteine + H(+). It functions in the pathway cofactor biosynthesis; ubiquinone biosynthesis. Functionally, O-methyltransferase that catalyzes the 2 O-methylation steps in the ubiquinone biosynthetic pathway. This chain is Ubiquinone biosynthesis O-methyltransferase, found in Pseudomonas putida (strain GB-1).